Reading from the N-terminus, the 515-residue chain is Maturase K (515 aa).

Belongs to the intron maturase 2 family. MatK subfamily.

The protein localises to the plastid. Its subcellular location is the chloroplast. Its function is as follows. Usually encoded in the trnK tRNA gene intron. Probably assists in splicing its own and other chloroplast group II introns. This is Maturase K from Pseudotsuga menziesii (Douglas-fir).